We begin with the raw amino-acid sequence, 247 residues long: Ribosomal RNA small subunit methyltransferase G (247 aa).

S-adenosyl-L-methionine is bound by residues G84, F89, 136-137, and R155; that span reads AE.

The protein belongs to the methyltransferase superfamily. RNA methyltransferase RsmG family.

It localises to the cytoplasm. Its function is as follows. Specifically methylates the N7 position of a guanine in 16S rRNA. The sequence is that of Ribosomal RNA small subunit methyltransferase G from Prochlorococcus marinus (strain MIT 9303).